The following is a 423-amino-acid chain: UDP-N-acetylglucosamine 1-carboxyvinyltransferase 2 (423 aa).

Phosphoenolpyruvate is bound at residue 23–24 (KN). Arg-95 is a UDP-N-acetyl-alpha-D-glucosamine binding site. Cys-119 serves as the catalytic Proton donor. At Cys-119 the chain carries 2-(S-cysteinyl)pyruvic acid O-phosphothioketal. UDP-N-acetyl-alpha-D-glucosamine contacts are provided by Asp-306 and Ile-328.

Belongs to the EPSP synthase family. MurA subfamily.

It localises to the cytoplasm. It carries out the reaction phosphoenolpyruvate + UDP-N-acetyl-alpha-D-glucosamine = UDP-N-acetyl-3-O-(1-carboxyvinyl)-alpha-D-glucosamine + phosphate. The protein operates within cell wall biogenesis; peptidoglycan biosynthesis. In terms of biological role, cell wall formation. Adds enolpyruvyl to UDP-N-acetylglucosamine. The sequence is that of UDP-N-acetylglucosamine 1-carboxyvinyltransferase 2 from Symbiobacterium thermophilum (strain DSM 24528 / JCM 14929 / IAM 14863 / T).